A 472-amino-acid polypeptide reads, in one-letter code: ATP synthase subunit beta (472 aa).

An ATP-binding site is contributed by 155-162; sequence GGAGVGKT.

The protein belongs to the ATPase alpha/beta chains family. F-type ATPases have 2 components, CF(1) - the catalytic core - and CF(0) - the membrane proton channel. CF(1) has five subunits: alpha(3), beta(3), gamma(1), delta(1), epsilon(1). CF(0) has three main subunits: a(1), b(2) and c(9-12). The alpha and beta chains form an alternating ring which encloses part of the gamma chain. CF(1) is attached to CF(0) by a central stalk formed by the gamma and epsilon chains, while a peripheral stalk is formed by the delta and b chains.

Its subcellular location is the cell inner membrane. The enzyme catalyses ATP + H2O + 4 H(+)(in) = ADP + phosphate + 5 H(+)(out). In terms of biological role, produces ATP from ADP in the presence of a proton gradient across the membrane. The catalytic sites are hosted primarily by the beta subunits. The polypeptide is ATP synthase subunit beta (Fervidobacterium nodosum (strain ATCC 35602 / DSM 5306 / Rt17-B1)).